The primary structure comprises 122 residues: Protein NIM1-INTERACTING 2 (122 aa).

A compositionally biased stretch (basic and acidic residues) spans 1 to 22 (MNNSLKKEERVEEDNGKSDGNR). The tract at residues 1-28 (MNNSLKKEERVEEDNGKSDGNRGKPSTE) is disordered. An involved in NPR1/NIM1 interaction region spans residues 39-45 (DEFFKIL). The Nuclear localization signal signature appears at 70–74 (KKRKR).

Interacts with NPR1 N-terminal region.

Its subcellular location is the nucleus. This Arabidopsis thaliana (Mouse-ear cress) protein is Protein NIM1-INTERACTING 2.